Reading from the N-terminus, the 201-residue chain is Glutathione peroxidase 1 (201 aa).

A Phosphoserine modification is found at Ser32. Residue Sec47 is part of the active site. A non-standard amino acid (selenocysteine) is located at residue Sec47. Lys86, Lys112, and Lys146 each carry N6-acetyllysine; alternate. An N6-succinyllysine; alternate mark is found at Lys86, Lys112, and Lys146. A phosphoserine mark is found at Ser195 and Ser199.

Belongs to the glutathione peroxidase family. Homotetramer. Interacts with MIEN1. In terms of processing, during periods of oxidative stress, Sec-47 may react with a superoxide radical, irreversibly lose hydroselenide and be converted to dehydroalanine.

The protein resides in the cytoplasm. It localises to the mitochondrion. The catalysed reaction is 2 glutathione + H2O2 = glutathione disulfide + 2 H2O. It catalyses the reaction a hydroperoxy polyunsaturated fatty acid + 2 glutathione = a hydroxy polyunsaturated fatty acid + glutathione disulfide + H2O. The enzyme catalyses tert-butyl hydroperoxide + 2 glutathione = tert-butanol + glutathione disulfide + H2O. It carries out the reaction cumene hydroperoxide + 2 glutathione = 2-phenylpropan-2-ol + glutathione disulfide + H2O. The catalysed reaction is (13S)-hydroperoxy-(9Z,11E)-octadecadienoate + 2 glutathione = (13S)-hydroxy-(9Z,11E)-octadecadienoate + glutathione disulfide + H2O. It catalyses the reaction (9S)-hydroperoxy-(10E,12Z)-octadecadienoate + 2 glutathione = (9S)-hydroxy-(10E,12Z)-octadecadienoate + glutathione disulfide + H2O. The enzyme catalyses (5S)-hydroperoxy-(6E,8Z,11Z,14Z)-eicosatetraenoate + 2 glutathione = (5S)-hydroxy-(6E,8Z,11Z,14Z)-eicosatetraenoate + glutathione disulfide + H2O. It carries out the reaction (12S)-hydroperoxy-(5Z,8Z,10E,14Z)-eicosatetraenoate + 2 glutathione = (12S)-hydroxy-(5Z,8Z,10E,14Z)-eicosatetraenoate + glutathione disulfide + H2O. The catalysed reaction is (12R)-hydroperoxy-(5Z,8Z,10E,14Z)-eicosatetraenoate + 2 glutathione = (12R)-hydroxy-(5Z,8Z,10E,14Z)-eicosatetraenoate + glutathione disulfide + H2O. It catalyses the reaction (15S)-hydroperoxy-(5Z,8Z,11Z,13E)-eicosatetraenoate + 2 glutathione = (15S)-hydroxy-(5Z,8Z,11Z,13E)-eicosatetraenoate + glutathione disulfide + H2O. The enzyme catalyses (5S)-hydroperoxy-(6E,8Z,11Z,14Z,17Z)-eicosapentaenoate + 2 glutathione = (5S)-hydroxy-(6E,8Z,11Z,14Z,17Z)-eicosapentaenoate + glutathione disulfide + H2O. It carries out the reaction (12S)-hydroperoxy-(5Z,8Z,10E,14Z,17Z)-eicosapentaenoate + 2 glutathione = (12S)-hydroxy-(5Z,8Z,10E,14Z,17Z)-eicosapentaenoate + glutathione disulfide + H2O. The catalysed reaction is (15S)-hydroperoxy-(5Z,8Z,11Z,13E,17Z)-eicosapentaenoate + 2 glutathione = (15S)-hydroxy-(5Z,8Z,11Z,13E,17Z)-eicosapentaenoate + glutathione disulfide + H2O. It catalyses the reaction (15S)-hydroperoxy-(11Z,13E)-eicosadienoate + 2 glutathione = (15S)-hydroxy-(11Z,13E)-eicosadienoate + glutathione disulfide + H2O. The enzyme catalyses (17S)-hydroperoxy-(4Z,7Z,10Z,13Z,15E,19Z)-docosahexaenoate + 2 glutathione = (17S)-hydroxy-(4Z,7Z,10Z,13Z,15E,19Z)-docosahexaenoate + glutathione disulfide + H2O. Catalyzes the reduction of hydroperoxides in a glutathione-dependent manner thus regulating cellular redox homeostasis. Can reduce small soluble hydroperoxides such as H2O2, cumene hydroperoxide and tert-butyl hydroperoxide, as well as several fatty acid-derived hydroperoxides. In platelets catalyzes the reduction of 12-hydroperoxyeicosatetraenoic acid, the primary product of the arachidonate 12-lipoxygenase pathway. This Macaca fuscata fuscata (Japanese macaque) protein is Glutathione peroxidase 1 (GPX1).